Here is a 230-residue protein sequence, read N- to C-terminus: Movement and silencing protein TGBp1 (230 aa).

The (+)RNA virus helicase ATP-binding domain occupies 1–114 (MDSIINALTS…GLALRPHFIK (114 aa)). In terms of domain architecture, (+)RNA virus helicase C-terminal spans 115–230 (SVSHRLCPAT…VRSPPPHPSH (116 aa)).

It belongs to the Tymovirales TGBp1 protein family. As to quaternary structure, homodimer and homooligomer. Interacts with capsid protein. Interacts with host AGO1; this interaction targets the host protein for degradation, thereby suppressing the antiviral RNA silencing.

The protein resides in the host cytoplasm. Its function is as follows. Transports viral genome to neighboring plant cells directly through plasmosdesmata, without any budding. The movement protein allows efficient cell to cell propagation, by bypassing the host cell wall barrier. Increases plasmodesma size exclusion limit. Acts as a suppressor of RNA-mediated gene silencing, also known as post-transcriptional gene silencing (PTGS), a mechanism of plant viral defense that limits the accumulation of viral RNAs. The chain is Movement and silencing protein TGBp1 from Plantago asiatica (P1AMV).